The following is a 231-amino-acid chain: MAKKGKKYQEAANKVDRTKHYSVEEAISLAKETSIANFDASVEVAFRLGIDTRKNDQQIRGAVVLPNGTGKSQRVLVFAKGDKITEAEEAGADYVGESEYVQKIQQGWFDFDVVVATPDMMGEVGKLGRVLGPKGLMPNPKTGTVTMDVKKAVEEIKAGKVEYRAEKAGIVHASIGKVSFSDEKLVENFKTLQDVLAKAKPSSAKGTYFKSVAVTTTMGPGVKIDTSSFKL.

This sequence belongs to the universal ribosomal protein uL1 family. As to quaternary structure, part of the 50S ribosomal subunit.

Functionally, binds directly to 23S rRNA. The L1 stalk is quite mobile in the ribosome, and is involved in E site tRNA release. Protein L1 is also a translational repressor protein, it controls the translation of the L11 operon by binding to its mRNA. This is Large ribosomal subunit protein uL1 from Staphylococcus haemolyticus (strain JCSC1435).